The primary structure comprises 244 residues: Lytic polysaccharide monooxygenase-like protein ANIA_04702 (244 aa).

An N-terminal signal peptide occupies residues methionine 1–alanine 23. Position 24 (histidine 24) interacts with Cu(2+). Position 24 is a methylhistidine (histidine 24). Residues asparagine 57, asparagine 80, asparagine 118, asparagine 159, asparagine 192, and asparagine 198 are each glycosylated (N-linked (GlcNAc...) asparagine). Intrachain disulfides connect cysteine 72–cysteine 177 and cysteine 142–cysteine 196. Asparagine 215 carries GPI-anchor amidated asparagine lipidation. Residues alanine 216–alanine 244 constitute a propeptide, removed in mature form.

It belongs to the X325 family. Cu(2+) is required as a cofactor. The catalytically essential N-terminal histidine His-24 is post-translationally modified by methylation to prevent protonation of the histidine side chain, and protect the critical active site of the enzyme from oxidative damage.

It is found in the cell membrane. Lytic polysaccharide monooxygenase-like protein that has diverged to biological functions other than polysaccharide degradation since it does not perform oxidative cleavage of polysaccharides. Acts as a cell surface-bound protein that functions in the copper-accumulation pathway. May also act as the major cell wall sensor that regulates MAP kinase-dependent hyphal anastomosis, the fusion of hyphal cells. This is Lytic polysaccharide monooxygenase-like protein ANIA_04702 from Emericella nidulans (strain FGSC A4 / ATCC 38163 / CBS 112.46 / NRRL 194 / M139) (Aspergillus nidulans).